Reading from the N-terminus, the 75-residue chain is MLCLPVFIILLLLASPAAPNPLEKRIQSDLIRAALEDADMKTGEREILNIIDSISDVAKQICCQITVDCCVLDEE.

The N-terminal stretch at 1–19 (MLCLPVFIILLLLASPAAP) is a signal peptide. The propeptide occupies 20 to 59 (NPLEKRIQSDLIRAALEDADMKTGEREILNIIDSISDVAK). Position 60 is a pyrrolidone carboxylic acid (Gln-60).

This sequence belongs to the conotoxin T superfamily. In terms of processing, contains 2 disulfide bonds that can be either 'C1-C3, C2-C4' or 'C1-C4, C2-C3', since these disulfide connectivities have been observed for conotoxins with cysteine framework V (for examples, see AC P0DQQ7 and AC P81755). In terms of tissue distribution, expressed by the venom duct.

The protein localises to the secreted. The sequence is that of Conotoxin Vn5.6 from Conus ventricosus (Mediterranean cone).